Consider the following 270-residue polypeptide: Molybdenum storage protein subunit beta (270 aa).

As to quaternary structure, octamer consisting of 4 alpha and 4 beta chains.

The protein localises to the cytoplasm. Intracellular storage of molybdenum. Binds polyoxomolybdates. Can bind at least 90 molybdenum atoms per protein molecule. The polypeptide is Molybdenum storage protein subunit beta (Azotobacter vinelandii (strain DJ / ATCC BAA-1303)).